A 476-amino-acid chain; its full sequence is Aspartyl/glutamyl-tRNA(Asn/Gln) amidotransferase subunit B (476 aa).

Belongs to the GatB/GatE family. GatB subfamily. Heterotrimer of A, B and C subunits.

The catalysed reaction is L-glutamyl-tRNA(Gln) + L-glutamine + ATP + H2O = L-glutaminyl-tRNA(Gln) + L-glutamate + ADP + phosphate + H(+). It carries out the reaction L-aspartyl-tRNA(Asn) + L-glutamine + ATP + H2O = L-asparaginyl-tRNA(Asn) + L-glutamate + ADP + phosphate + 2 H(+). Allows the formation of correctly charged Asn-tRNA(Asn) or Gln-tRNA(Gln) through the transamidation of misacylated Asp-tRNA(Asn) or Glu-tRNA(Gln) in organisms which lack either or both of asparaginyl-tRNA or glutaminyl-tRNA synthetases. The reaction takes place in the presence of glutamine and ATP through an activated phospho-Asp-tRNA(Asn) or phospho-Glu-tRNA(Gln). In Clostridium botulinum (strain Okra / Type B1), this protein is Aspartyl/glutamyl-tRNA(Asn/Gln) amidotransferase subunit B.